Reading from the N-terminus, the 764-residue chain is Polyadenylate-binding protein, cytoplasmic and nuclear (764 aa).

Residues 36-56 (VPEAQAEGAEAAPTPTAAPHP) are disordered. 4 RRM domains span residues 60–138 (ASLY…WSQR), 148–225 (GNIF…HHIP), 241–318 (TNVY…RAQK), and 344–462 (VNLY…LAQR). Disordered stretches follow at residues 375–420 (VMRD…GDRK) and 587–634 (GRGG…PRGN). Composition is skewed to basic and acidic residues over residues 387–399 (KDEK…KEGE) and 408–420 (GSEK…GDRK). Over residues 587-596 (GRGGPAGRGP) the composition is skewed to gly residues. A compositionally biased stretch (low complexity) spans 597 to 613 (QGIPAGIPQGLQGGPAV). The PABC domain maps to 657 to 734 (GSFLQAQLAT…ALAVYDEYLK (78 aa)). Polar residues predominate over residues 735-745 (TQGQQPTQQPA). The segment at 735–764 (TQGQQPTQQPAEANGEQPKAEEQKPEEQKA) is disordered. The span at 752–764 (PKAEEQKPEEQKA) shows a compositional bias: basic and acidic residues.

The protein belongs to the polyadenylate-binding protein type-1 family.

It localises to the cytoplasm. It is found in the nucleus. In terms of biological role, binds the poly(A) tail of mRNA. Appears to be an important mediator of the multiple roles of the poly(A) tail in mRNA biogenesis, stability and translation. In the nucleus, involved in both mRNA cleavage and polyadenylation. Is also required for efficient mRNA export to the cytoplasm. Acts in concert with a poly(A)-specific nuclease (PAN) to affect poly(A) tail shortening, which may occur concomitantly with either nucleocytoplasmic mRNA transport or translational initiation. In the cytoplasm, stimulates translation initiation and regulates mRNA decay through translation termination-coupled poly(A) shortening, probably mediated by PAN. This is Polyadenylate-binding protein, cytoplasmic and nuclear (pabp-1) from Neurospora crassa (strain ATCC 24698 / 74-OR23-1A / CBS 708.71 / DSM 1257 / FGSC 987).